The sequence spans 239 residues: Purine nucleoside phosphorylase DeoD-type (239 aa).

H5 is an a purine D-ribonucleoside binding site. Residues G21, R25, R44, and 88–91 (RVGS) each bind phosphate. A purine D-ribonucleoside-binding positions include 180–182 (EME) and 204–205 (SD). D205 functions as the Proton donor in the catalytic mechanism.

This sequence belongs to the PNP/UDP phosphorylase family. As to quaternary structure, homohexamer; trimer of homodimers.

The enzyme catalyses a purine D-ribonucleoside + phosphate = a purine nucleobase + alpha-D-ribose 1-phosphate. It carries out the reaction a purine 2'-deoxy-D-ribonucleoside + phosphate = a purine nucleobase + 2-deoxy-alpha-D-ribose 1-phosphate. In terms of biological role, catalyzes the reversible phosphorolytic breakdown of the N-glycosidic bond in the beta-(deoxy)ribonucleoside molecules, with the formation of the corresponding free purine bases and pentose-1-phosphate. The polypeptide is Purine nucleoside phosphorylase DeoD-type (Salmonella agona (strain SL483)).